Reading from the N-terminus, the 245-residue chain is 5-oxoprolinase subunit A (245 aa).

Belongs to the LamB/PxpA family. As to quaternary structure, forms a complex composed of PxpA, PxpB and PxpC.

It carries out the reaction 5-oxo-L-proline + ATP + 2 H2O = L-glutamate + ADP + phosphate + H(+). Functionally, catalyzes the cleavage of 5-oxoproline to form L-glutamate coupled to the hydrolysis of ATP to ADP and inorganic phosphate. The protein is 5-oxoprolinase subunit A of Neisseria meningitidis serogroup C (strain 053442).